The sequence spans 197 residues: MKILLATGNEQKAKELKCILPKNIGNKEIEYLTLGDFPDLRMPEETGKTLEENAILKAREAARQAGIAALADDTGLEVDALNGEPGVRSARYAGEYCDPDENNRKLLDSLDGLFLGQRTARFKTVACLATPEGEYELAEGVLGGLIGFGYRGENGFGYDPLFIVKGKSKTLAELTLDEKNKISHRRKAFEKISKKIK.

Position 7–12 (7–12) interacts with substrate; sequence TGNEQK. Mg(2+) is bound by residues Glu-44 and Asp-73. The active-site Proton acceptor is the Asp-73. Substrate is bound by residues Thr-74, 156–159, Lys-179, and 184–185; these read FGYD and HR.

It belongs to the HAM1 NTPase family. In terms of assembly, homodimer. Mg(2+) serves as cofactor.

It carries out the reaction XTP + H2O = XMP + diphosphate + H(+). The enzyme catalyses dITP + H2O = dIMP + diphosphate + H(+). It catalyses the reaction ITP + H2O = IMP + diphosphate + H(+). Its function is as follows. Pyrophosphatase that catalyzes the hydrolysis of nucleoside triphosphates to their monophosphate derivatives, with a high preference for the non-canonical purine nucleotides XTP (xanthosine triphosphate), dITP (deoxyinosine triphosphate) and ITP. Seems to function as a house-cleaning enzyme that removes non-canonical purine nucleotides from the nucleotide pool, thus preventing their incorporation into DNA/RNA and avoiding chromosomal lesions. The chain is dITP/XTP pyrophosphatase from Elusimicrobium minutum (strain Pei191).